The chain runs to 259 residues: 5'-nucleotidase SurE (259 aa).

Positions 8, 9, 41, and 100 each coordinate a divalent metal cation.

It belongs to the SurE nucleotidase family. A divalent metal cation is required as a cofactor.

Its subcellular location is the cytoplasm. The catalysed reaction is a ribonucleoside 5'-phosphate + H2O = a ribonucleoside + phosphate. Nucleotidase that shows phosphatase activity on nucleoside 5'-monophosphates. In Natranaerobius thermophilus (strain ATCC BAA-1301 / DSM 18059 / JW/NM-WN-LF), this protein is 5'-nucleotidase SurE.